The chain runs to 472 residues: Protein nucleotidyltransferase YdiU (472 aa).

ATP contacts are provided by Gly86, Gly88, Arg89, Lys109, Asp121, Gly122, Arg172, and Arg179. Residue Asp244 is the Proton acceptor of the active site. Asn245 and Asp254 together coordinate Mg(2+). Asp254 lines the ATP pocket.

The protein belongs to the SELO family. Mg(2+) serves as cofactor. The cofactor is Mn(2+).

The catalysed reaction is L-seryl-[protein] + ATP = 3-O-(5'-adenylyl)-L-seryl-[protein] + diphosphate. The enzyme catalyses L-threonyl-[protein] + ATP = 3-O-(5'-adenylyl)-L-threonyl-[protein] + diphosphate. It carries out the reaction L-tyrosyl-[protein] + ATP = O-(5'-adenylyl)-L-tyrosyl-[protein] + diphosphate. It catalyses the reaction L-histidyl-[protein] + UTP = N(tele)-(5'-uridylyl)-L-histidyl-[protein] + diphosphate. The catalysed reaction is L-seryl-[protein] + UTP = O-(5'-uridylyl)-L-seryl-[protein] + diphosphate. The enzyme catalyses L-tyrosyl-[protein] + UTP = O-(5'-uridylyl)-L-tyrosyl-[protein] + diphosphate. Its function is as follows. Nucleotidyltransferase involved in the post-translational modification of proteins. It can catalyze the addition of adenosine monophosphate (AMP) or uridine monophosphate (UMP) to a protein, resulting in modifications known as AMPylation and UMPylation. In Ruegeria pomeroyi (strain ATCC 700808 / DSM 15171 / DSS-3) (Silicibacter pomeroyi), this protein is Protein nucleotidyltransferase YdiU.